The primary structure comprises 187 residues: UPF0200 protein PYRAB09750 (187 aa).

7 to 14 (GMPGSGKG) contacts ATP.

It belongs to the UPF0200 family.

This is UPF0200 protein PYRAB09750 from Pyrococcus abyssi (strain GE5 / Orsay).